The chain runs to 1179 residues: Protein FAM83H (1179 aa).

Positions 1–286 (MARRSQSSSQ…LFAQSEPLVP (286 aa)) are DUF1669. Positions 1–286 (MARRSQSSSQ…LFAQSEPLVP (286 aa)) are mediates interaction with CSNK1A1 and is required for FAM83H activity in keratin cytoskeleton organization. At Thr465 the chain carries Phosphothreonine. 2 disordered regions span residues 484–577 (ADPD…GRAG) and 636–669 (FPTK…DSFR). Phosphoserine is present on residues Ser513, Ser514, Ser516, Ser523, Ser647, and Ser667. The residue at position 756 (Thr756) is a Phosphothreonine. Residues Ser759, Ser785, and Ser813 each carry the phosphoserine modification. The disordered stretch occupies residues 830 to 1026 (RLPSRFLSAQ…RGPRARLSSA (197 aa)). A compositionally biased stretch (polar residues) spans 836–847 (LSAQSHSTSPQG). A phosphoserine mark is found at Ser870 and Ser881. At Thr883 the chain carries Phosphothreonine. The segment covering 884–906 (PGFSTRRGSPTTGFIEQKGSPTS) has biased composition (polar residues). Phosphoserine is present on Ser892. At Thr894 the chain carries Phosphothreonine. 9 positions are modified to phosphoserine: Ser903, Ser914, Ser925, Ser936, Ser945, Ser1003, Ser1009, Ser1024, and Ser1025. Thr1040 bears the Phosphothreonine mark. Disordered regions lie at residues 1047 to 1084 (ISAH…APDM) and 1143 to 1165 (EEAS…SKVG). 3 positions are modified to phosphoserine: Ser1048, Ser1068, and Ser1147.

Belongs to the FAM83 family. As to quaternary structure, directly interacts (via DUF1669) with casein kinase isoforms CSNK1A1, CSNK1A1L, CSNK1D and CSNK1E. Interaction with CSNK1A1 recruits CSNK1A1 to keratin filaments. Interacts with KRT18 and probably other keratins. Expressed in the tooth follicle.

It localises to the cytoplasm. It is found in the cytoskeleton. In terms of biological role, may play a major role in the structural organization and calcification of developing enamel. May play a role in keratin cytoskeleton disassembly by recruiting CSNK1A1 to keratin filaments. Thereby, it may regulate epithelial cell migration. This Homo sapiens (Human) protein is Protein FAM83H.